A 447-amino-acid polypeptide reads, in one-letter code: Tubulin beta chain (447 aa).

8 residues coordinate GTP: Gln-11, Glu-69, Ser-138, Gly-142, Thr-143, Gly-144, Asn-204, and Asn-226. Glu-69 provides a ligand contact to Mg(2+). The segment at 425–447 is disordered; sequence YQEASISEGEEEYDEEAPLEAEE. The segment covering 432-447 has biased composition (acidic residues); that stretch reads EGEEEYDEEAPLEAEE.

This sequence belongs to the tubulin family. Dimer of alpha and beta chains. A typical microtubule is a hollow water-filled tube with an outer diameter of 25 nm and an inner diameter of 15 nM. Alpha-beta heterodimers associate head-to-tail to form protofilaments running lengthwise along the microtubule wall with the beta-tubulin subunit facing the microtubule plus end conferring a structural polarity. Microtubules usually have 13 protofilaments but different protofilament numbers can be found in some organisms and specialized cells. It depends on Mg(2+) as a cofactor.

It is found in the cytoplasm. The protein localises to the cytoskeleton. Tubulin is the major constituent of microtubules, a cylinder consisting of laterally associated linear protofilaments composed of alpha- and beta-tubulin heterodimers. Microtubules grow by the addition of GTP-tubulin dimers to the microtubule end, where a stabilizing cap forms. Below the cap, tubulin dimers are in GDP-bound state, owing to GTPase activity of alpha-tubulin. This Phaeosphaeria nodorum (strain SN15 / ATCC MYA-4574 / FGSC 10173) (Glume blotch fungus) protein is Tubulin beta chain (tubB).